A 60-amino-acid polypeptide reads, in one-letter code: Three-finger toxin MS3 (60 aa).

Cystine bridges form between C3/C22, C15/C39, C41/C52, and C53/C58.

The protein belongs to the three-finger toxin family. Short-chain subfamily. Type I alpha-neurotoxin sub-subfamily. In terms of tissue distribution, expressed by the venom gland.

Its subcellular location is the secreted. Its function is as follows. Produces peripheral paralysis by blocking neuromuscular transmission at the postsynaptic site. Binds to and inhibits the endogenous nicotinic acetylcholine receptors (nAChR) in human rhabdomyosarcoma TE 671 cell line with an IC(50) of 346 mM. This neurotoxin is lethal to mice by intraperitoneal injection and to zebrafish by injection at the back of the dorsolateral region. The protein is Three-finger toxin MS3 of Micrurus surinamensis (Surinam coral snake).